The chain runs to 420 residues: Hemojuvelin (420 aa).

An N-terminal signal peptide occupies residues 1 to 32 (MGQSPSPRSPHGSPPTLSTLTLLLLLCGQAHS). The residue at position 43 (Tyr43) is a Phosphotyrosine. A glycan (N-linked (GlcNAc...) asparagine) is linked at Asn111. Positions 113 to 135 (SRQGPTAPPPARGPALPGAGPAP) are disordered. Over residues 125 to 134 (GPALPGAGPA) the composition is skewed to low complexity. 2 disulfides stabilise this stretch: Cys141-Cys223 and Cys160-Cys310. Asn206 and Asn365 each carry an N-linked (GlcNAc...) asparagine glycan. Asp393 carries the GPI-anchor amidated aspartate lipid modification. The propeptide at 394–420 (AGPPLSPAICLVPLLSALFVLWLCFSK) is removed in mature form.

Belongs to the repulsive guidance molecule (RGM) family. In terms of assembly, interacts with BMP2 and BMP4. Interacts with BMP6. Interacts with BMPR1B. Interacts with TMPRSS6. Post-translationally, autocatalytically cleaved at low pH; the two chains remain linked via two disulfide bonds. Also proteolytically processed by TMPRSS6, several fragments being released in the extracellular space; regulates HJV activity in BMP signaling and thefore iron homeostasis. As to expression, muscle cell lineage.

It is found in the cell membrane. In terms of biological role, acts as a bone morphogenetic protein (BMP) coreceptor. Through enhancement of BMP signaling regulates hepcidin (HAMP) expression and regulates iron homeostasis. This Mus musculus (Mouse) protein is Hemojuvelin.